A 263-amino-acid chain; its full sequence is 4-hydroxy-tetrahydrodipicolinate reductase (263 aa).

NAD(+) contacts are provided by residues glycine 7 to methionine 12, glycine 96 to threonine 98, and alanine 122 to phenylalanine 125. Histidine 152 acts as the Proton donor/acceptor in catalysis. Histidine 153 serves as a coordination point for (S)-2,3,4,5-tetrahydrodipicolinate. Lysine 156 serves as the catalytic Proton donor. Glycine 162–threonine 163 lines the (S)-2,3,4,5-tetrahydrodipicolinate pocket.

This sequence belongs to the DapB family.

It is found in the cytoplasm. The enzyme catalyses (S)-2,3,4,5-tetrahydrodipicolinate + NAD(+) + H2O = (2S,4S)-4-hydroxy-2,3,4,5-tetrahydrodipicolinate + NADH + H(+). It catalyses the reaction (S)-2,3,4,5-tetrahydrodipicolinate + NADP(+) + H2O = (2S,4S)-4-hydroxy-2,3,4,5-tetrahydrodipicolinate + NADPH + H(+). It functions in the pathway amino-acid biosynthesis; L-lysine biosynthesis via DAP pathway; (S)-tetrahydrodipicolinate from L-aspartate: step 4/4. Its function is as follows. Catalyzes the conversion of 4-hydroxy-tetrahydrodipicolinate (HTPA) to tetrahydrodipicolinate. The protein is 4-hydroxy-tetrahydrodipicolinate reductase of Listeria monocytogenes serotype 4b (strain F2365).